The primary structure comprises 325 residues: DNA-directed RNA polymerase subunit alpha (325 aa).

Residues 1-231 (MQTSLLKPKI…DQLSVFAALE (231 aa)) form an alpha N-terminal domain (alpha-NTD) region. Residues 246–325 (IDPILLRPVD…ENWPPAGLDK (80 aa)) form an alpha C-terminal domain (alpha-CTD) region.

This sequence belongs to the RNA polymerase alpha chain family. As to quaternary structure, homodimer. The RNAP catalytic core consists of 2 alpha, 1 beta, 1 beta' and 1 omega subunit. When a sigma factor is associated with the core the holoenzyme is formed, which can initiate transcription.

It carries out the reaction RNA(n) + a ribonucleoside 5'-triphosphate = RNA(n+1) + diphosphate. In terms of biological role, DNA-dependent RNA polymerase catalyzes the transcription of DNA into RNA using the four ribonucleoside triphosphates as substrates. This chain is DNA-directed RNA polymerase subunit alpha, found in Burkholderia multivorans (strain ATCC 17616 / 249).